The following is a 351-amino-acid chain: Biotin synthase (351 aa).

Residues 48–265 form the Radical SAM core domain; it reads NKVRIHILDN…LCMFRLINPD (218 aa). [4Fe-4S] cluster contacts are provided by cysteine 63, cysteine 67, and cysteine 70. The [2Fe-2S] cluster site is built by cysteine 107, cysteine 139, cysteine 199, and arginine 269.

This sequence belongs to the radical SAM superfamily. Biotin synthase family. As to quaternary structure, homodimer. Requires [4Fe-4S] cluster as cofactor. [2Fe-2S] cluster serves as cofactor.

It catalyses the reaction (4R,5S)-dethiobiotin + (sulfur carrier)-SH + 2 reduced [2Fe-2S]-[ferredoxin] + 2 S-adenosyl-L-methionine = (sulfur carrier)-H + biotin + 2 5'-deoxyadenosine + 2 L-methionine + 2 oxidized [2Fe-2S]-[ferredoxin]. It functions in the pathway cofactor biosynthesis; biotin biosynthesis; biotin from 7,8-diaminononanoate: step 2/2. Functionally, catalyzes the conversion of dethiobiotin (DTB) to biotin by the insertion of a sulfur atom into dethiobiotin via a radical-based mechanism. This Leptospira interrogans serogroup Icterohaemorrhagiae serovar copenhageni (strain Fiocruz L1-130) protein is Biotin synthase.